Consider the following 188-residue polypeptide: GMP synthase [glutamine-hydrolyzing] subunit A (188 aa).

A Glutamine amidotransferase type-1 domain is found at 1-188; that stretch reads MIVILNNGGQ…FCKVCGLLGE (188 aa). Cys-76 serves as the catalytic Nucleophile. Residues His-163 and Glu-165 contribute to the active site.

As to quaternary structure, heterodimer composed of a glutamine amidotransferase subunit (A) and a GMP-binding subunit (B).

The enzyme catalyses XMP + L-glutamine + ATP + H2O = GMP + L-glutamate + AMP + diphosphate + 2 H(+). Its pathway is purine metabolism; GMP biosynthesis; GMP from XMP (L-Gln route): step 1/1. Its function is as follows. Catalyzes the synthesis of GMP from XMP. This chain is GMP synthase [glutamine-hydrolyzing] subunit A, found in Methanococcus aeolicus (strain ATCC BAA-1280 / DSM 17508 / OCM 812 / Nankai-3).